The following is a 173-amino-acid chain: Dual-action ribosomal maturation protein DarP (173 aa).

The protein belongs to the DarP family.

Its subcellular location is the cytoplasm. Member of a network of 50S ribosomal subunit biogenesis factors which assembles along the 30S-50S interface, preventing incorrect 23S rRNA structures from forming. Promotes peptidyl transferase center (PTC) maturation. The polypeptide is Dual-action ribosomal maturation protein DarP (Pseudomonas entomophila (strain L48)).